We begin with the raw amino-acid sequence, 484 residues long: UDP-N-acetylmuramate--L-alanine ligase (484 aa).

Gly-127–Thr-133 serves as a coordination point for ATP.

This sequence belongs to the MurCDEF family.

The protein resides in the cytoplasm. The enzyme catalyses UDP-N-acetyl-alpha-D-muramate + L-alanine + ATP = UDP-N-acetyl-alpha-D-muramoyl-L-alanine + ADP + phosphate + H(+). It participates in cell wall biogenesis; peptidoglycan biosynthesis. Its function is as follows. Cell wall formation. The chain is UDP-N-acetylmuramate--L-alanine ligase from Shewanella amazonensis (strain ATCC BAA-1098 / SB2B).